The chain runs to 1119 residues: G8 domain-containing protein DDB_G0288475 (1119 aa).

The first 22 residues, 1–22 (MKYSSFLLLFIYIFFILNNINA), serve as a signal peptide directing secretion. Positions 276–404 (TIWTSGVVPL…YHNTWTKLAA (129 aa)) constitute a G8 domain. 8 N-linked (GlcNAc...) asparagine glycosylation sites follow: Asn-308, Asn-559, Asn-736, Asn-854, Asn-968, Asn-1035, Asn-1056, and Asn-1070.

This sequence belongs to the comF family.

It localises to the secreted. The chain is G8 domain-containing protein DDB_G0288475 from Dictyostelium discoideum (Social amoeba).